The primary structure comprises 363 residues: Type-1 angiotensin II receptor B (363 aa).

The Extracellular portion of the chain corresponds to 1 to 27 (MLSNISAGENSEVEKIVVKCSKSGMHN). An N-linked (GlcNAc...) asparagine glycan is attached at asparagine 4. Cystine bridges form between cysteine 20–cysteine 274 and cysteine 103–cysteine 182. A helical transmembrane segment spans residues 28–57 (YIFITIPIIYSTIFVVGVFGNSLVVIVIYS). The Cytoplasmic segment spans residues 58 to 63 (YMKMKT). The chain crosses the membrane as a helical span at residues 64–91 (MASVFLMNLALSDLCFVITLPLWAVYTA). Topologically, residues 92-100 (MHYHWPFGD) are extracellular. Residues 101 to 127 (LLCKIASTAITLNLYTTVFLLTCLSID) traverse the membrane as a helical segment. Residues 128–143 (RYSAIVHPMKSRIRRT) are Cytoplasmic-facing. The chain crosses the membrane as a helical span at residues 144 to 167 (VMVARLTCVGIWLVAFLASLPSVI). At 168 to 192 (YRQIFIFPDTNQTVCALVYHSGHIY) the chain is on the extracellular side. Arginine 169 is an angiotensin II binding site. N-linked (GlcNAc...) asparagine glycosylation is present at asparagine 178. The angiotensin II site is built by tyrosine 186 and lysine 201. A helical transmembrane segment spans residues 193-218 (FMVGMSLVKNIVGFFIPFVIILTSYT). At 219 to 239 (LIGKTLKEVYRAQRARNDDIF) the chain is on the cytoplasmic side. Residues 240 to 268 (KMIVAVVLLFFFCWIPHQVFTFLDVLIQM) form a helical membrane-spanning segment. Over 269 to 278 (DVIQNCKMYD) the chain is Extracellular. The chain crosses the membrane as a helical span at residues 279 to 304 (IVDTGMPITICIAYFNSCLNPFLYGF). The Cytoplasmic segment spans residues 305 to 363 (FGKKFRKHFLQLIKYIPPKMRTHASVNTKSSTVSQRLSDTKCASNKIALWIFDIEEHCK). 2 S-palmitoyl cysteine lipidation sites follow: cysteine 346 and cysteine 362.

It belongs to the G-protein coupled receptor 1 family. In terms of processing, C-terminal Ser or Thr residues may be phosphorylated. As to expression, heart membranes, follicular oocytes.

It localises to the cell membrane. Receptor for angiotensin II, a vasoconstricting peptide, which acts as a key regulator of blood pressure and sodium retention by the kidney. The activated receptor in turn couples to G-alpha proteins G(q) (GNAQ, GNA11, GNA14 or GNA15) and thus activates phospholipase C and increases the cytosolic Ca(2+) concentrations, which in turn triggers cellular responses such as stimulation of protein kinase C. The sequence is that of Type-1 angiotensin II receptor B (agtr1-b) from Xenopus laevis (African clawed frog).